A 646-amino-acid chain; its full sequence is Calcium-dependent protein kinase 2 (646 aa).

The N-myristoyl glycine moiety is linked to residue G2. A lipid anchor (S-palmitoyl cysteine) is attached at C5. The disordered stretch occupies residues 27–169 (RIGAEQASSS…HMRRVSSAGL (143 aa)). Polar residues predominate over residues 32 to 43 (QASSSSHGNGQV). Basic and acidic residues-rich tracts occupy residues 73–119 (PETK…KREV) and 126–157 (AKPETKSESKPETTKPETTSETKPETKAEPQK). Residues 186–444 (YSLGRKLGQG…AHQVLCHPWV (259 aa)) enclose the Protein kinase domain. ATP-binding positions include 192–200 (LGQGQFGTT) and K215. Catalysis depends on D310, which acts as the Proton acceptor. S350 carries the post-translational modification Phosphoserine. The interval 450 to 480 (APDKPLDSAVLSRMKQFSAMNKFKKMALRVI) is autoinhibitory domain. 4 EF-hand domains span residues 487-522 (EEIAGLKQMFKMIDADNSGQITFEELKAGLKRVGAN), 523-558 (LKESEILDLMQAADVDNSGTIDYKEFIAATLHLNKI), 559-592 (EREDHLFAAFSYFDKDESGFITPDELQQACEEFG), and 593-628 (VEDARIEEMMRDVDQDKDGRIDYNEFVAMMQKGSIM). Ca(2+) is bound by residues D500, D502, S504, Q506, E511, D536, D538, S540, T542, E547, D572, D574, S576, E583, D606, D608, D610, R612, and E617.

It belongs to the protein kinase superfamily. Ser/Thr protein kinase family. CDPK subfamily. As to quaternary structure, interacts with 14-3-3 proteins.

The protein resides in the endoplasmic reticulum membrane. The catalysed reaction is L-seryl-[protein] + ATP = O-phospho-L-seryl-[protein] + ADP + H(+). The enzyme catalyses L-threonyl-[protein] + ATP = O-phospho-L-threonyl-[protein] + ADP + H(+). Activated by calcium. Autophosphorylation may play an important role in the regulation of the kinase activity. Its function is as follows. May play a role in signal transduction pathways that involve calcium as a second messenger. The polypeptide is Calcium-dependent protein kinase 2 (CPK2) (Arabidopsis thaliana (Mouse-ear cress)).